A 101-amino-acid chain; its full sequence is NAD(P)H-quinone oxidoreductase subunit 4L (101 aa).

The next 3 membrane-spanning stretches (helical) occupy residues 3 to 23 (LRYFLLLAAALFCIGIYGLIT), 30 to 50 (VLMSIELLLNAVNLNLMAFSN), and 64 to 84 (VFVITVAAAEAAVGLAIVLAI).

It belongs to the complex I subunit 4L family. In terms of assembly, NDH-1 can be composed of about 15 different subunits; different subcomplexes with different compositions have been identified which probably have different functions.

The protein localises to the cellular thylakoid membrane. The catalysed reaction is a plastoquinone + NADH + (n+1) H(+)(in) = a plastoquinol + NAD(+) + n H(+)(out). The enzyme catalyses a plastoquinone + NADPH + (n+1) H(+)(in) = a plastoquinol + NADP(+) + n H(+)(out). In terms of biological role, NDH-1 shuttles electrons from an unknown electron donor, via FMN and iron-sulfur (Fe-S) centers, to quinones in the respiratory and/or the photosynthetic chain. The immediate electron acceptor for the enzyme in this species is believed to be plastoquinone. Couples the redox reaction to proton translocation, and thus conserves the redox energy in a proton gradient. Cyanobacterial NDH-1 also plays a role in inorganic carbon-concentration. The protein is NAD(P)H-quinone oxidoreductase subunit 4L of Nostoc sp. (strain PCC 7120 / SAG 25.82 / UTEX 2576).